The primary structure comprises 449 residues: BPI fold-containing family B member 6 (449 aa).

An N-terminal signal peptide occupies residues 1–18 (MLCSLSLVLCGLLAGTRA). N-linked (GlcNAc...) asparagine glycosylation is present at asparagine 115. A disulfide bridge links cysteine 138 with cysteine 172.

Belongs to the BPI/LBP/Plunc superfamily. BPI/LBP family.

The protein localises to the secreted. The protein is BPI fold-containing family B member 6 (Bpifb6) of Mus musculus (Mouse).